The primary structure comprises 472 residues: Ribosomal protein uS12 methylthiotransferase RimO (472 aa).

One can recognise an MTTase N-terminal domain in the interval 33–143 (NRIGFVSLGC…VLKHVHKYVP (111 aa)). Cys-42, Cys-78, Cys-107, Cys-175, Cys-179, and Cys-182 together coordinate [4Fe-4S] cluster. The 238-residue stretch at 161–398 (LTPKHYAYLK…MEVQAEISAE (238 aa)) folds into the Radical SAM core domain. Residues 401 to 467 (ARFVGRTLDI…EHDLWAEVVD (67 aa)) form the TRAM domain.

This sequence belongs to the methylthiotransferase family. RimO subfamily. [4Fe-4S] cluster is required as a cofactor.

Its subcellular location is the cytoplasm. The enzyme catalyses L-aspartate(89)-[ribosomal protein uS12]-hydrogen + (sulfur carrier)-SH + AH2 + 2 S-adenosyl-L-methionine = 3-methylsulfanyl-L-aspartate(89)-[ribosomal protein uS12]-hydrogen + (sulfur carrier)-H + 5'-deoxyadenosine + L-methionine + A + S-adenosyl-L-homocysteine + 2 H(+). Its function is as follows. Catalyzes the methylthiolation of an aspartic acid residue of ribosomal protein uS12. This chain is Ribosomal protein uS12 methylthiotransferase RimO, found in Shewanella baltica (strain OS155 / ATCC BAA-1091).